A 206-amino-acid chain; its full sequence is Large ribosomal subunit protein uL4 (206 aa).

The disordered stretch occupies residues 44–78; that stretch reads RSGNRAQKDREQVKHTTKKPWRQKGTGRARAGMSS. Basic residues predominate over residues 58 to 70; the sequence is HTTKKPWRQKGTG.

The protein belongs to the universal ribosomal protein uL4 family. Part of the 50S ribosomal subunit.

Functionally, one of the primary rRNA binding proteins, this protein initially binds near the 5'-end of the 23S rRNA. It is important during the early stages of 50S assembly. It makes multiple contacts with different domains of the 23S rRNA in the assembled 50S subunit and ribosome. Its function is as follows. Forms part of the polypeptide exit tunnel. The polypeptide is Large ribosomal subunit protein uL4 (Paraburkholderia phytofirmans (strain DSM 17436 / LMG 22146 / PsJN) (Burkholderia phytofirmans)).